Here is a 379-residue protein sequence, read N- to C-terminus: cAMP-dependent protein kinase type I-alpha regulatory subunit (379 aa).

Methionine 1 carries the N-acetylmethionine modification. A dimerization and phosphorylation region spans residues 1 to 134 (MASSSTSSEE…ALAKAIEKNV (134 aa)). Residues 63–93 (QMVSQQKSSSRSDSREDEVSPPMNPVVKGRR) are disordered. The Pseudophosphorylation motif motif lies at 94-98 (RRGAI). Residues 135-252 (LFAH…SKVS), glutamate 200, arginine 209, 253-379 (ILES…SLSV), glutamate 324, and arginine 333 contribute to the 3',5'-cyclic AMP site.

This sequence belongs to the cAMP-dependent kinase regulatory chain family. As to quaternary structure, the inactive holoenzyme is composed of two regulatory chains and two catalytic chains. Activation by cAMP releases the two active catalytic monomers and the regulatory dimer. Interacts with PRKACA and PRKACB. Interacts with PRRC1; resulting in PKA activation. In terms of processing, the pseudophosphorylation site binds to the substrate-binding region of the catalytic chain, resulting in the inhibition of its activity.

It is found in the cell membrane. Its function is as follows. Regulatory subunit of the cAMP-dependent protein kinases involved in cAMP signaling in cells. In Danio rerio (Zebrafish), this protein is cAMP-dependent protein kinase type I-alpha regulatory subunit (prkar1aa).